Consider the following 203-residue polypeptide: Ras-related protein RABD2a (203 aa).

GTP is bound by residues 15–23 (GDSGVGKSC), 33–40 (YVESYIST), 63–67 (DTAGQ), 121–124 (NKSD), and 151–153 (SAK). The Effector region motif lies at 37 to 45 (YISTIGVDF). The segment at 176–203 (QPAGNNARPPTVQIRGQPVAQKNGCCST) is disordered. Residues C200 and C201 are each lipidated (S-geranylgeranyl cysteine).

Belongs to the small GTPase superfamily. Rab family. In terms of assembly, does not interact with GC5.

It localises to the golgi apparatus. It is found in the trans-Golgi network membrane. The protein localises to the golgi apparatus membrane. In terms of biological role, protein transport. Regulator of membrane traffic from the Golgi apparatus towards the endoplasmic reticulum (ER). This chain is Ras-related protein RABD2a (RABD2A), found in Arabidopsis thaliana (Mouse-ear cress).